An 843-amino-acid chain; its full sequence is Transmembrane protease serine 7 (843 aa).

Over 1 to 76 (MDKENSDVSA…KVPFWNVQNK (76 aa)) the chain is Cytoplasmic. The disordered stretch occupies residues 27-67 (AQKKLPVRRPPLPGRRLPLPGRRPPQRPIGKAKPKKQSKKK). Residues 56–67 (GKAKPKKQSKKK) show a composition bias toward basic residues. The helical; Signal-anchor for type II membrane protein transmembrane segment at 77–97 (IILFTVFLFILAVIAWTLLWL) threads the bilayer. Over 98–843 (YISKTESKDA…WIHKYVPSLL (746 aa)) the chain is Extracellular. The SEA domain maps to 106 to 234 (DAFYFAGMFR…DSVVLNAGLR (129 aa)). Disulfide bonds link Cys-247/Cys-273, Cys-299/Cys-322, Cys-365/Cys-396, Cys-484/Cys-496, Cys-491/Cys-509, Cys-503/Cys-518, Cys-525/Cys-544, Cys-538/Cys-553, Cys-559/Cys-571, Cys-566/Cys-585, Cys-579/Cys-594, and Cys-631/Cys-647. 2 consecutive CUB domains span residues 247-360 (CSQY…FEVI) and 365-481 (CENT…YNIS). 3 consecutive LDL-receptor class A domains span residues 483–519 (PCPVGSFRCSSGLCVPQAQRCDGVNDCFDESDELFCV), 517–554 (FCVSPQPACNTSSFRQHGPLICDGFRDCENGRDEQNCT), and 558–595 (PCNNRTFKCGNDICFRKQNAKCDGTVDCPDGSDEEGCT). The region spanning 606–840 (IIGGTDTLEG…FVPWIHKYVP (235 aa)) is the Peptidase S1 domain. Residues His-646 and Asp-694 each act as charge relay system in the active site. 2 cysteine pairs are disulfide-bonded: Cys-730-Cys-796 and Cys-762-Cys-775. Ser-790 serves as the catalytic Charge relay system.

Belongs to the peptidase S1 family. As to quaternary structure, forms a heterodimer with SERPINA5. N-glycosylated. As to expression, expressed in brain, ovary, testis, salivary gland, trachea and lung.

Its subcellular location is the cell membrane. In terms of biological role, serine protease which preferentially hydrolyzes peptides with Arg at the P1 position. In Homo sapiens (Human), this protein is Transmembrane protease serine 7 (TMPRSS7).